We begin with the raw amino-acid sequence, 408 residues long: Solute carrier family 35 member F1 (408 aa).

Residues 1–20 (MIPPEPPQPQLQPPPPPAPP) are disordered. The next 10 membrane-spanning stretches (helical) occupy residues 60–80 (MLIS…IGLT), 94–114 (VFQS…TLAV), 129–147 (WWKY…YLVV), 159–179 (QLLD…FLLI), 186–206 (FIGI…DVLV), 221–241 (LLVL…ESII), 247–267 (VEFL…QLAI), 284–304 (LLYV…PVVI), 311–331 (SVNL…LFLF), and 335–355 (FSGL…LYSS).

This sequence belongs to the SLC35F solute transporter family.

It is found in the cytoplasmic vesicle. The protein localises to the secretory vesicle. Its subcellular location is the synaptic vesicle membrane. Putative solute transporter. In Mus musculus (Mouse), this protein is Solute carrier family 35 member F1 (Slc35f1).